The chain runs to 184 residues: Casparian strip membrane protein 3 (184 aa).

Residues 1–22 (MEGSGEHGETSKGPLSKGVSRG) lie on the Cytoplasmic side of the membrane. Residues 23 to 43 (LCILDLIFRVIAVIGTLASAI) traverse the membrane as a helical segment. Residues 44–72 (AMGTTNQTMPFFTQFVQFKERYSDLPTLT) lie on the Extracellular side of the membrane. The N-linked (GlcNAc...) asparagine glycan is linked to Asn49. The helical transmembrane segment at 73–93 (FFVVANSIASAYLIISLPLSI) threads the bilayer. Residues 94-105 (VHIIRSRAKYSR) are Cytoplasmic-facing. A helical transmembrane segment spans residues 106 to 126 (LILIFFDVAMLALVTAAASAG). Over 127–159 (AAIVYLAHNGNVSANWFAICQQFDSFCERISGS) the chain is Extracellular. N-linked (GlcNAc...) asparagine glycosylation occurs at Asn137. The chain crosses the membrane as a helical span at residues 160–180 (LIGSFAAMVVLILLILLSAVA). Topologically, residues 181–184 (LARR) are cytoplasmic.

The protein belongs to the Casparian strip membrane proteins (CASP) family. Homodimer and heterodimers.

It localises to the cell membrane. Regulates membrane-cell wall junctions and localized cell wall deposition. Required for establishment of the Casparian strip membrane domain (CSD) and the subsequent formation of Casparian strips, a cell wall modification of the root endodermis that determines an apoplastic barrier between the intraorganismal apoplasm and the extraorganismal apoplasm and prevents lateral diffusion. The protein is Casparian strip membrane protein 3 of Brachypodium distachyon (Purple false brome).